We begin with the raw amino-acid sequence, 157 residues long: Small ribosomal subunit protein uS7 (157 aa).

It belongs to the universal ribosomal protein uS7 family. Part of the 30S ribosomal subunit. Contacts proteins S9 and S11.

Functionally, one of the primary rRNA binding proteins, it binds directly to 16S rRNA where it nucleates assembly of the head domain of the 30S subunit. Is located at the subunit interface close to the decoding center, probably blocks exit of the E-site tRNA. This is Small ribosomal subunit protein uS7 from Salinibacter ruber (strain DSM 13855 / M31).